Here is a 537-residue protein sequence, read N- to C-terminus: Protein pns1 (537 aa).

Positions methionine 1–glycine 16 are enriched in polar residues. The interval methionine 1–asparagine 35 is disordered. The Cytoplasmic portion of the chain corresponds to methionine 1–aspartate 81. Over residues glutamine 23–asparagine 35 the composition is skewed to low complexity. Residues isoleucine 82–alanine 102 traverse the membrane as a helical segment. At isoleucine 103–threonine 130 the chain is on the extracellular side. Residues leucine 131 to glycine 151 form a helical membrane-spanning segment. The Cytoplasmic segment spans residues alanine 152–leucine 158. Residues phenylalanine 159–isoleucine 179 traverse the membrane as a helical segment. The Extracellular segment spans residues alanine 180–tyrosine 184. Residues glycine 185–isoleucine 205 traverse the membrane as a helical segment. The Cytoplasmic segment spans residues proline 206 to histidine 227. The helical transmembrane segment at methionine 228–valine 248 threads the bilayer. Over threonine 249–arginine 275 the chain is Extracellular. A helical transmembrane segment spans residues alanine 276–leucine 296. The Cytoplasmic portion of the chain corresponds to lysine 297–alanine 333. The chain crosses the membrane as a helical span at residues threonine 334–leucine 354. Topologically, residues arginine 355–serine 370 are extracellular. Residues isoleucine 371–valine 391 traverse the membrane as a helical segment. The Cytoplasmic portion of the chain corresponds to threonine 392–cysteine 432. A helical membrane pass occupies residues leucine 433–alanine 453. Residues tyrosine 454–asparagine 469 lie on the Extracellular side of the membrane. Asparagine 469 carries N-linked (GlcNAc...) asparagine glycosylation. Residues phenylalanine 470–methionine 490 form a helical membrane-spanning segment. At threonine 491–alanine 537 the chain is on the cytoplasmic side.

This sequence belongs to the CTL (choline transporter-like) family.

The protein localises to the cell membrane. Functionally, probably involved in transport through the plasma membrane. The protein is Protein pns1 (pns1) of Aspergillus fumigatus (strain ATCC MYA-4609 / CBS 101355 / FGSC A1100 / Af293) (Neosartorya fumigata).